Consider the following 367-residue polypeptide: MKPFLRSQLERYAQRLQELDFLLSREDIMADMQQYRSISREHAEVTQVAGRYARYQQREADLAGAREMLEDPDMAEMAQEEIHAAETELVQLEDELQRLLLPKDPDDERNAFIEIRAGTGGDESALFAGDLARMYTRYAATVGWKVEVMSANESEIGGYKEVVLRIEGQPGTGPSGSGVYGALKFESGGHRVQRVPATETQGRIHTSACTVAVMPEPDEHQAITLNPADLRIDTFRASGAGGQHINKTDSAVRVVHLPTGIVAECQDGRSQHSNKAKALQVLQARIQEKERSERAAKEAALRKGLIGSGDRSDRIRTYNFPQGRLTDHRINLTLYKLLAIMEGDLGEVLQALQHAREAELLAELGLE.

The residue at position 243 (Gln243) is an N5-methylglutamine.

This sequence belongs to the prokaryotic/mitochondrial release factor family. In terms of processing, methylated by PrmC. Methylation increases the termination efficiency of RF1.

The protein resides in the cytoplasm. In terms of biological role, peptide chain release factor 1 directs the termination of translation in response to the peptide chain termination codons UAG and UAA. The polypeptide is Peptide chain release factor 1 (Acidovorax ebreus (strain TPSY) (Diaphorobacter sp. (strain TPSY))).